The sequence spans 283 residues: Phosphatidylserine decarboxylase proenzyme (283 aa).

Active-site charge relay system; for autoendoproteolytic cleavage activity residues include aspartate 96, histidine 152, and serine 250. Residue serine 250 is the Schiff-base intermediate with substrate; via pyruvic acid; for decarboxylase activity of the active site. Pyruvic acid (Ser); by autocatalysis is present on serine 250.

It belongs to the phosphatidylserine decarboxylase family. PSD-B subfamily. Prokaryotic type I sub-subfamily. As to quaternary structure, heterodimer of a large membrane-associated beta subunit and a small pyruvoyl-containing alpha subunit. Pyruvate is required as a cofactor. Is synthesized initially as an inactive proenzyme. Formation of the active enzyme involves a self-maturation process in which the active site pyruvoyl group is generated from an internal serine residue via an autocatalytic post-translational modification. Two non-identical subunits are generated from the proenzyme in this reaction, and the pyruvate is formed at the N-terminus of the alpha chain, which is derived from the carboxyl end of the proenzyme. The autoendoproteolytic cleavage occurs by a canonical serine protease mechanism, in which the side chain hydroxyl group of the serine supplies its oxygen atom to form the C-terminus of the beta chain, while the remainder of the serine residue undergoes an oxidative deamination to produce ammonia and the pyruvoyl prosthetic group on the alpha chain. During this reaction, the Ser that is part of the protease active site of the proenzyme becomes the pyruvoyl prosthetic group, which constitutes an essential element of the active site of the mature decarboxylase.

It is found in the cell membrane. The catalysed reaction is a 1,2-diacyl-sn-glycero-3-phospho-L-serine + H(+) = a 1,2-diacyl-sn-glycero-3-phosphoethanolamine + CO2. It participates in phospholipid metabolism; phosphatidylethanolamine biosynthesis; phosphatidylethanolamine from CDP-diacylglycerol: step 2/2. Functionally, catalyzes the formation of phosphatidylethanolamine (PtdEtn) from phosphatidylserine (PtdSer). The chain is Phosphatidylserine decarboxylase proenzyme from Acinetobacter baumannii (strain SDF).